We begin with the raw amino-acid sequence, 1226 residues long: DNA-directed RNA polymerase subunit beta (1226 aa).

This sequence belongs to the RNA polymerase beta chain family. The RNAP catalytic core consists of 2 alpha, 1 beta, 1 beta' and 1 omega subunit. When a sigma factor is associated with the core the holoenzyme is formed, which can initiate transcription.

The enzyme catalyses RNA(n) + a ribonucleoside 5'-triphosphate = RNA(n+1) + diphosphate. Its function is as follows. DNA-dependent RNA polymerase catalyzes the transcription of DNA into RNA using the four ribonucleoside triphosphates as substrates. In Leptospira borgpetersenii serovar Hardjo-bovis (strain JB197), this protein is DNA-directed RNA polymerase subunit beta.